The primary structure comprises 218 residues: Thiopurine S-methyltransferase (218 aa).

Residues Trp10, Leu45, Glu66, and Arg123 each coordinate S-adenosyl-L-methionine.

The protein belongs to the class I-like SAM-binding methyltransferase superfamily. TPMT family.

Its subcellular location is the cytoplasm. The catalysed reaction is S-adenosyl-L-methionine + a thiopurine = S-adenosyl-L-homocysteine + a thiopurine S-methylether.. This Shewanella amazonensis (strain ATCC BAA-1098 / SB2B) protein is Thiopurine S-methyltransferase.